The sequence spans 134 residues: Ribosome-binding factor A (134 aa).

This sequence belongs to the RbfA family. As to quaternary structure, monomer. Binds 30S ribosomal subunits, but not 50S ribosomal subunits or 70S ribosomes.

The protein localises to the cytoplasm. One of several proteins that assist in the late maturation steps of the functional core of the 30S ribosomal subunit. Associates with free 30S ribosomal subunits (but not with 30S subunits that are part of 70S ribosomes or polysomes). Required for efficient processing of 16S rRNA. May interact with the 5'-terminal helix region of 16S rRNA. The protein is Ribosome-binding factor A of Synechococcus sp. (strain CC9311).